The primary structure comprises 137 residues: MAEKEGKKEKKERWGIAHIYASFNNTIITITDLTGAETFARWSGGMVVDADREESSPYAAMKAARRAAEEAMEKGITAVHVKVRAPGGHGPKTPGPGAQAAIRALARAGLKIGRIEDVTPIPHDGTRRPGGKRGRRV.

The interval 116 to 137 (EDVTPIPHDGTRRPGGKRGRRV) is disordered.

The protein belongs to the universal ribosomal protein uS11 family. Part of the 30S ribosomal subunit.

Functionally, located on the platform of the 30S subunit. The protein is Small ribosomal subunit protein uS11 of Methanopyrus kandleri (strain AV19 / DSM 6324 / JCM 9639 / NBRC 100938).